Reading from the N-terminus, the 128-residue chain is Transcription antitermination protein NusB (128 aa).

The protein belongs to the NusB family.

Functionally, involved in transcription antitermination. Required for transcription of ribosomal RNA (rRNA) genes. Binds specifically to the boxA antiterminator sequence of the ribosomal RNA (rrn) operons. This chain is Transcription antitermination protein NusB, found in Staphylococcus carnosus (strain TM300).